Reading from the N-terminus, the 402-residue chain is Phosphoglycerate kinase (402 aa).

Residues 21 to 23 (DFN), arginine 36, 59 to 62 (HLGR), arginine 119, and arginine 154 each bind substrate. ATP-binding positions include lysine 207, glycine 298, glutamate 329, and 356–359 (GGDA).

It belongs to the phosphoglycerate kinase family. In terms of assembly, monomer.

Its subcellular location is the cytoplasm. The catalysed reaction is (2R)-3-phosphoglycerate + ATP = (2R)-3-phospho-glyceroyl phosphate + ADP. It functions in the pathway carbohydrate degradation; glycolysis; pyruvate from D-glyceraldehyde 3-phosphate: step 2/5. This chain is Phosphoglycerate kinase (pgk), found in Chlamydia pneumoniae (Chlamydophila pneumoniae).